A 752-amino-acid polypeptide reads, in one-letter code: Probable beta-glucosidase D (752 aa).

An N-terminal signal peptide occupies residues 1–18; that stretch reads MRFVSLAVGAALLGAAGA. N-linked (GlcNAc...) asparagine glycosylation is found at Asn187 and Asn237. Residue Asp265 is part of the active site. Residues Asn299, Asn343, Asn441, Asn510, Asn532, Asn571, Asn586, Asn638, Asn661, and Asn743 are each glycosylated (N-linked (GlcNAc...) asparagine).

This sequence belongs to the glycosyl hydrolase 3 family.

It is found in the secreted. It catalyses the reaction Hydrolysis of terminal, non-reducing beta-D-glucosyl residues with release of beta-D-glucose.. It functions in the pathway glycan metabolism; cellulose degradation. In terms of biological role, beta-glucosidases are one of a number of cellulolytic enzymes involved in the degradation of cellulosic biomass. Catalyzes the last step releasing glucose from the inhibitory cellobiose. In Aspergillus oryzae (strain ATCC 42149 / RIB 40) (Yellow koji mold), this protein is Probable beta-glucosidase D (bglD).